We begin with the raw amino-acid sequence, 318 residues long: MIKKRNTTKISVIGAGSVGATTAYALMLSGVATEIVLVDVNKSKTEGEAMDLSHGADFVKPVNILSGDYKDTEGSDIVVITAGAAQKVGETRLQLINKNINIFKSIIPEVVKYNKDAILLVVSNPVDVLSYVTYKLSGFPKERVIGSGTVLDTSRLKHEIGKRYKIDPRNVNTYIMGEHGDSEIATWSVTNIQNIKIDEYANKENLEYNDNFRKEVYENVKNAAYEVINRKGATFYAIALAVTRIVKAILGDEKTILPVSTLVENYYGIKDVYLGMPCIVGGSGIEKALSIDLNKTEASKLVKSAETLKNTLNNASGL.

NAD(+) is bound by residues V18, D39, K44, Y69, and 83–84 (GA). Residues Q86 and R92 each contribute to the substrate site. Residues S105, 122-124 (VSN), and S147 contribute to the NAD(+) site. 124–127 (NPVD) is a binding site for substrate. Residue 152 to 155 (DTSR) coordinates substrate. H179 serves as the catalytic Proton acceptor. A Phosphotyrosine modification is found at Y225. T234 is a substrate binding site.

It belongs to the LDH/MDH superfamily. LDH family. As to quaternary structure, homotetramer.

The protein resides in the cytoplasm. The enzyme catalyses (S)-lactate + NAD(+) = pyruvate + NADH + H(+). It functions in the pathway fermentation; pyruvate fermentation to lactate; (S)-lactate from pyruvate: step 1/1. In terms of biological role, catalyzes the conversion of lactate to pyruvate. The sequence is that of L-lactate dehydrogenase from Clostridium botulinum (strain Langeland / NCTC 10281 / Type F).